The sequence spans 201 residues: 3-isopropylmalate dehydratase small subunit (201 aa).

This sequence belongs to the LeuD family. LeuD type 1 subfamily. In terms of assembly, heterodimer of LeuC and LeuD.

It carries out the reaction (2R,3S)-3-isopropylmalate = (2S)-2-isopropylmalate. It functions in the pathway amino-acid biosynthesis; L-leucine biosynthesis; L-leucine from 3-methyl-2-oxobutanoate: step 2/4. Functionally, catalyzes the isomerization between 2-isopropylmalate and 3-isopropylmalate, via the formation of 2-isopropylmaleate. The polypeptide is 3-isopropylmalate dehydratase small subunit (Erwinia tasmaniensis (strain DSM 17950 / CFBP 7177 / CIP 109463 / NCPPB 4357 / Et1/99)).